The chain runs to 393 residues: NAD(P)H-quinone oxidoreductase subunit H, chloroplastic (393 aa).

It belongs to the complex I 49 kDa subunit family. As to quaternary structure, NDH is composed of at least 16 different subunits, 5 of which are encoded in the nucleus.

The protein resides in the plastid. It is found in the chloroplast thylakoid membrane. It catalyses the reaction a plastoquinone + NADH + (n+1) H(+)(in) = a plastoquinol + NAD(+) + n H(+)(out). The enzyme catalyses a plastoquinone + NADPH + (n+1) H(+)(in) = a plastoquinol + NADP(+) + n H(+)(out). Functionally, NDH shuttles electrons from NAD(P)H:plastoquinone, via FMN and iron-sulfur (Fe-S) centers, to quinones in the photosynthetic chain and possibly in a chloroplast respiratory chain. The immediate electron acceptor for the enzyme in this species is believed to be plastoquinone. Couples the redox reaction to proton translocation, and thus conserves the redox energy in a proton gradient. This Eucalyptus globulus subsp. globulus (Tasmanian blue gum) protein is NAD(P)H-quinone oxidoreductase subunit H, chloroplastic.